We begin with the raw amino-acid sequence, 175 residues long: MNPYILTPDLNGEGLHIGIVRARFNEEIGQAQLQACLEELGKLGVDERDVMVVSVPGALELGVALARMAESYEFDALIALGAVIRGETYHFEVVSNESAAAISRIALETGIPVANGVLTVDTDEQAQARAAGKGADCAQVAVEMANLAAALEPEEDDEDEDDEDEDFDDEEDDGR.

Residues phenylalanine 24, 58 to 60 (ALE), and 82 to 84 (AVI) each bind 5-amino-6-(D-ribitylamino)uracil. (2S)-2-hydroxy-3-oxobutyl phosphate is bound at residue 87 to 88 (ET). Histidine 90 functions as the Proton donor in the catalytic mechanism. 5-amino-6-(D-ribitylamino)uracil is bound at residue asparagine 115. Arginine 129 serves as a coordination point for (2S)-2-hydroxy-3-oxobutyl phosphate. Positions 150 to 175 (ALEPEEDDEDEDDEDEDFDDEEDDGR) are disordered. Over residues 152–175 (EPEEDDEDEDDEDEDFDDEEDDGR) the composition is skewed to acidic residues.

This sequence belongs to the DMRL synthase family.

It catalyses the reaction (2S)-2-hydroxy-3-oxobutyl phosphate + 5-amino-6-(D-ribitylamino)uracil = 6,7-dimethyl-8-(1-D-ribityl)lumazine + phosphate + 2 H2O + H(+). Its pathway is cofactor biosynthesis; riboflavin biosynthesis; riboflavin from 2-hydroxy-3-oxobutyl phosphate and 5-amino-6-(D-ribitylamino)uracil: step 1/2. Catalyzes the formation of 6,7-dimethyl-8-ribityllumazine by condensation of 5-amino-6-(D-ribitylamino)uracil with 3,4-dihydroxy-2-butanone 4-phosphate. This is the penultimate step in the biosynthesis of riboflavin. This Bordetella bronchiseptica (strain ATCC BAA-588 / NCTC 13252 / RB50) (Alcaligenes bronchisepticus) protein is 6,7-dimethyl-8-ribityllumazine synthase.